We begin with the raw amino-acid sequence, 755 residues long: Xaa-Pro dipeptidyl-peptidase (755 aa).

Residues Ser-348, Asp-468, and His-498 each act as charge relay system in the active site.

Belongs to the peptidase S15 family. Homodimer.

The protein resides in the cytoplasm. The catalysed reaction is Hydrolyzes Xaa-Pro-|- bonds to release unblocked, N-terminal dipeptides from substrates including Ala-Pro-|-p-nitroanilide and (sequentially) Tyr-Pro-|-Phe-Pro-|-Gly-Pro-|-Ile.. Functionally, removes N-terminal dipeptides sequentially from polypeptides having unsubstituted N-termini provided that the penultimate residue is proline. In Streptococcus thermophilus, this protein is Xaa-Pro dipeptidyl-peptidase.